A 115-amino-acid polypeptide reads, in one-letter code: U3-lycotoxin-Ls1f (115 aa).

The first 20 residues, 1-20, serve as a signal peptide directing secretion; it reads MKFVLLFGVLLVTLFSYSSA. A propeptide spanning residues 21–44 is cleaved from the precursor; sequence EMLDDFDQADEDELLSLIEKEEAR. Disulfide bonds link cysteine 48–cysteine 63, cysteine 55–cysteine 72, cysteine 62–cysteine 87, and cysteine 74–cysteine 85.

This sequence belongs to the neurotoxin 19 (CSTX) family. 01 subfamily. As to expression, expressed by the venom gland.

It localises to the secreted. The polypeptide is U3-lycotoxin-Ls1f (Lycosa singoriensis (Wolf spider)).